The following is a 261-amino-acid chain: Class II histocompatibility antigen, M alpha chain (261 aa).

The N-terminal stretch at 1–26 (MEHEQKSGAVLLRLLRLLWLLPHSWA) is a signal peptide. Residues 27-124 (VLEASTPVLW…KLEGQIPVSR (98 aa)) form an alpha-1 region. Over 27–231 (VLEASTPVLW…ALPSDLLENA (205 aa)) the chain is Lumenal. N-linked (GlcNAc...) asparagine glycosylation is present at N41. Intrachain disulfides connect C50-C105 and C147-C202. An Ig-like C1-type domain is found at 114 to 215 (PKLEGQIPVS…HEIDRYTAIA (102 aa)). The alpha-2 stretch occupies residues 125-217 (GLSVAEVFTL…IDRYTAIAYW (93 aa)). The connecting peptide stretch occupies residues 218–231 (VPQNALPSDLLENA). The helical transmembrane segment at 232–252 (LCGVAFALGVLGTIIGIVFFL) threads the bilayer. Residues 253-261 (CSQRPCSGD) are Cytoplasmic-facing.

The protein belongs to the MHC class II family. As to quaternary structure, heterodimer of an alpha chain (DMA) and a beta chain (DMB). Interacts with MHCII; this interaction mediates rapid selection of high-affinity peptides.

The protein localises to the late endosome membrane. Its subcellular location is the lysosome membrane. Plays a critical role in catalyzing the release of class II-associated invariant chain peptide (CLIP) from newly synthesized MHC class II molecules and freeing the peptide binding site for acquisition of antigenic peptides. The chain is Class II histocompatibility antigen, M alpha chain (H2-DMa) from Mus musculus (Mouse).